Here is a 377-residue protein sequence, read N- to C-terminus: MSLPFTVIICIVLLSAILISIVIFGNSPNFRNTPIYKLRLKILRWNHDIIAWINYVDSHVFGNKLVFYSGWLVPLFYIIVVSFCLHQFFTKVYKLLPLFVRKSGFHSTYIAFTILCIFIDTFMATFSNPGKITTGNVDKVDNFFQNNELIFFADNYCSTCEIIKPARSKHCSICNNCIMLFDHHCIWVNNCVGYYNYKWFMGFLIANINLLGYGGYLCYQAMSSTKTEFPTLSYWKTIISTNDSNKATGVLLILCVIFIMIAVLFTGLHLRYLYLGVTTNECDKWSEVEYLISLGSLYQVIDSNLNEKYVEKCVIMNHDNDSYETVFISLKNENVLFSSNDGINLRKIESMEDDLINIYDHGFVDNLKERMFNRVLN.

The Lumenal segment spans residues 1–4 (MSLP). A helical transmembrane segment spans residues 5 to 25 (FTVIICIVLLSAILISIVIFG). Topologically, residues 26–64 (NSPNFRNTPIYKLRLKILRWNHDIIAWINYVDSHVFGNK) are cytoplasmic. The chain crosses the membrane as a helical span at residues 65–85 (LVFYSGWLVPLFYIIVVSFCL). The Lumenal portion of the chain corresponds to 86–103 (HQFFTKVYKLLPLFVRKS). A helical transmembrane segment spans residues 104 to 124 (GFHSTYIAFTILCIFIDTFMA). Residues 125-198 (TFSNPGKITT…NNCVGYYNYK (74 aa)) lie on the Cytoplasmic side of the membrane. Residues 155-205 (NYCSTCEIIKPARSKHCSICNNCIMLFDHHCIWVNNCVGYYNYKWFMGFLI) enclose the DHHC domain. The helical transmembrane segment at 199 to 219 (WFMGFLIANINLLGYGGYLCY) threads the bilayer. Over 220 to 249 (QAMSSTKTEFPTLSYWKTIISTNDSNKATG) the chain is Lumenal. Residues 250–270 (VLLILCVIFIMIAVLFTGLHL) form a helical membrane-spanning segment. The Cytoplasmic portion of the chain corresponds to 271–377 (RYLYLGVTTN…KERMFNRVLN (107 aa)).

The protein belongs to the DHHC palmitoyltransferase family. SWF1 subfamily.

It localises to the endoplasmic reticulum membrane. The enzyme catalyses L-cysteinyl-[protein] + hexadecanoyl-CoA = S-hexadecanoyl-L-cysteinyl-[protein] + CoA. Palmitoyltransferase that targets several endosomal SNAREs. Palmitoylates the SNAREs at cysteine residues close to the cytoplasmic end of their transmembrane domain. May have a role in the cellular quality control of transmembrane domain-containing proteins. The chain is Palmitoyltransferase SWF1 (SWF1) from Debaryomyces hansenii (strain ATCC 36239 / CBS 767 / BCRC 21394 / JCM 1990 / NBRC 0083 / IGC 2968) (Yeast).